The sequence spans 166 residues: PTS system glucose-specific EIIA component (166 aa).

The region spanning 34 to 138 is the PTS EIIA type-1 domain; it reads DPVFAQKMMG…SVISPIIITN (105 aa). Zn(2+)-binding residues include histidine 71 and histidine 86. Catalysis depends on histidine 86, which acts as the Tele-phosphohistidine intermediate; for EIIA activity. Phosphohistidine; by HPr is present on histidine 86.

In terms of assembly, heterodimer with glycerol kinase (glpk). Zn(2+) is required as a cofactor.

The protein localises to the cytoplasm. The phosphoenolpyruvate-dependent sugar phosphotransferase system (sugar PTS), a major carbohydrate active transport system, catalyzes the phosphorylation of incoming sugar substrates concomitantly with their translocation across the cell membrane. The enzyme II complex composed of PtsG and Crr is involved in glucose transport. This chain is PTS system glucose-specific EIIA component (crr), found in Staphylococcus aureus (strain MRSA252).